A 272-amino-acid chain; its full sequence is Acidic leucine-rich nuclear phosphoprotein 32-related protein 2 (272 aa).

3 LRR repeats span residues 57–78 (SLEE…PRLP), 79–100 (ALRR…AAVA), and 106–127 (TLRH…APLA). In terms of domain architecture, LRRCT spans 139-184 (CPVTKAKGYRDKVFALIPSLKFLDGMDAEGNDCLDSDDEEDEEEDE). Residues 163–272 (GMDAEGNDCL…DSEDDANGDN (110 aa)) form a disordered region. The segment covering 164–241 (MDAEGNDCLD…DEAGADEEDE (78 aa)) has biased composition (acidic residues). A compositionally biased stretch (polar residues) spans 248–257 (SKGSSGSAQP).

Belongs to the ANP32 family.

In Oryza sativa subsp. japonica (Rice), this protein is Acidic leucine-rich nuclear phosphoprotein 32-related protein 2.